Reading from the N-terminus, the 352-residue chain is CRISPR-associated endonuclease Cas1 1 (352 aa).

Residues Glu207, His274, and Glu289 each coordinate Mn(2+).

This sequence belongs to the CRISPR-associated endonuclease Cas1 family. Homodimer, forms a heterotetramer with a Cas2 homodimer. Mg(2+) serves as cofactor. The cofactor is Mn(2+).

In terms of biological role, CRISPR (clustered regularly interspaced short palindromic repeat), is an adaptive immune system that provides protection against mobile genetic elements (viruses, transposable elements and conjugative plasmids). CRISPR clusters contain spacers, sequences complementary to antecedent mobile elements, and target invading nucleic acids. CRISPR clusters are transcribed and processed into CRISPR RNA (crRNA). Acts as a dsDNA endonuclease. Involved in the integration of spacer DNA into the CRISPR cassette. This is CRISPR-associated endonuclease Cas1 1 from Saccharolobus solfataricus (strain ATCC 35092 / DSM 1617 / JCM 11322 / P2) (Sulfolobus solfataricus).